Here is a 212-residue protein sequence, read N- to C-terminus: Uridine kinase (212 aa).

13 to 20 (GASASGKS) contributes to the ATP binding site.

Belongs to the uridine kinase family.

The protein resides in the cytoplasm. It carries out the reaction uridine + ATP = UMP + ADP + H(+). The enzyme catalyses cytidine + ATP = CMP + ADP + H(+). It functions in the pathway pyrimidine metabolism; CTP biosynthesis via salvage pathway; CTP from cytidine: step 1/3. It participates in pyrimidine metabolism; UMP biosynthesis via salvage pathway; UMP from uridine: step 1/1. This Psychromonas ingrahamii (strain DSM 17664 / CCUG 51855 / 37) protein is Uridine kinase.